A 115-amino-acid chain; its full sequence is Ribonuclease P protein component (115 aa).

The protein belongs to the RnpA family. In terms of assembly, consists of a catalytic RNA component (M1 or rnpB) and a protein subunit.

It carries out the reaction Endonucleolytic cleavage of RNA, removing 5'-extranucleotides from tRNA precursor.. In terms of biological role, RNaseP catalyzes the removal of the 5'-leader sequence from pre-tRNA to produce the mature 5'-terminus. It can also cleave other RNA substrates such as 4.5S RNA. The protein component plays an auxiliary but essential role in vivo by binding to the 5'-leader sequence and broadening the substrate specificity of the ribozyme. This Symbiobacterium thermophilum (strain DSM 24528 / JCM 14929 / IAM 14863 / T) protein is Ribonuclease P protein component.